The primary structure comprises 320 residues: Foldase protein PrsA (320 aa).

The signal sequence occupies residues 1 to 20 (MKMINKLIVPVTASALLLGA). Cys21 is lipidated: N-palmitoyl cysteine. A lipid anchor (S-diacylglycerol cysteine) is attached at Cys21. The PpiC domain maps to 139–245 (EDSKKASHIL…FGYHIIKADK (107 aa)). Positions 159–198 (EGLDDKEAKQKAEEIQKEVSKDPSKFGEIAKKESMDTGSA) are disordered.

The protein belongs to the PrsA family.

It is found in the cell membrane. It catalyses the reaction [protein]-peptidylproline (omega=180) = [protein]-peptidylproline (omega=0). Functionally, plays a major role in protein secretion by helping the post-translocational extracellular folding of several secreted proteins. In Staphylococcus aureus (strain bovine RF122 / ET3-1), this protein is Foldase protein PrsA.